The sequence spans 561 residues: Urocanate hydratase (561 aa).

Residues 52–53, glutamine 130, 176–178, glutamate 196, arginine 201, 242–243, 263–267, 273–274, and tyrosine 322 each bind NAD(+); these read GG, GMG, NA, QTSAH, and YL. The active site involves cysteine 410. Glycine 492 lines the NAD(+) pocket.

The protein belongs to the urocanase family. NAD(+) serves as cofactor.

It localises to the cytoplasm. It carries out the reaction 4-imidazolone-5-propanoate = trans-urocanate + H2O. Its pathway is amino-acid degradation; L-histidine degradation into L-glutamate; N-formimidoyl-L-glutamate from L-histidine: step 2/3. Catalyzes the conversion of urocanate to 4-imidazolone-5-propionate. This Salmonella choleraesuis (strain SC-B67) protein is Urocanate hydratase.